We begin with the raw amino-acid sequence, 220 residues long: Large ribosomal subunit protein uL3 (220 aa).

The tract at residues 61–81 (KGSKSNKYANKPAEGHAKKAD) is disordered.

Belongs to the universal ribosomal protein uL3 family. As to quaternary structure, part of the 50S ribosomal subunit. Forms a cluster with proteins L14 and L19.

One of the primary rRNA binding proteins, it binds directly near the 3'-end of the 23S rRNA, where it nucleates assembly of the 50S subunit. The polypeptide is Large ribosomal subunit protein uL3 (Staphylococcus epidermidis (strain ATCC 35984 / DSM 28319 / BCRC 17069 / CCUG 31568 / BM 3577 / RP62A)).